The primary structure comprises 811 residues: Myb-like DNA-binding protein BAS1 (811 aa).

Positions 34–110 constitute a Myb-like domain; sequence HRKNGRNSWS…DVRKRWTGSL (77 aa). HTH myb-type domains are found at residues 111-165 and 166-218; these read DPNL…GPGS and KGRL…TMVV. 2 consecutive DNA-binding regions (H-T-H motif) follow at residues 138–161 and 191–214; these read WLSI…IEVL and WRKI…RKII. Positions 237 to 264 are enriched in basic and acidic residues; it reads DMTDGKLRQHPIADSDIRSDSTPNKEEQ. 4 disordered regions span residues 237–320, 348–379, 535–713, and 782–811; these read DMTD…SAPP, SQMN…DEHM, ATSH…LRDE, and LHNE…LNPS. Low complexity predominate over residues 265 to 275; sequence LQLSQQNNPSL. Residues 282 to 298 show a composition bias toward basic and acidic residues; that stretch reads NVKENESSKLPRLKDND. Composition is skewed to polar residues over residues 348–366, 535–613, and 653–664; these read SQMN…QTSL, ATSH…TSGS, and LNPSPNSVRSNG. Positions 782–794 are enriched in basic and acidic residues; sequence LHNEAKKTSEHDM.

Monomer.

It is found in the nucleus. In terms of biological role, activates HIS4 transcription only in combination with PHO2/BAS2. BAS1 is also involved in the regulation of the purine biosynthesis pathway. The protein is Myb-like DNA-binding protein BAS1 (BAS1) of Saccharomyces cerevisiae (strain ATCC 204508 / S288c) (Baker's yeast).